Here is a 160-residue protein sequence, read N- to C-terminus: Nucleotide-binding protein CBU_0114 (160 aa).

This sequence belongs to the YajQ family.

Nucleotide-binding protein. This is Nucleotide-binding protein CBU_0114 from Coxiella burnetii (strain RSA 493 / Nine Mile phase I).